Reading from the N-terminus, the 53-residue chain is uncharacterized protein (53 aa).

This sequence belongs to the ELIP/psbS family.

The protein resides in the plastid. The protein localises to the chloroplast. Possible role in chlorophyll and/or carotenoid binding. This is an uncharacterized protein from Guillardia theta (Cryptophyte).